The primary structure comprises 166 residues: 2-C-methyl-D-erythritol 2,4-cyclodiphosphate synthase (166 aa).

The a divalent metal cation site is built by D12 and H14. Residues 12–14 and 38–39 each bind 4-CDP-2-C-methyl-D-erythritol 2-phosphate; these read DSH and HS. H46 is an a divalent metal cation binding site. Residues 60–62, 65–69, and R146 each bind 4-CDP-2-C-methyl-D-erythritol 2-phosphate; these read DIG and FPDTD.

It belongs to the IspF family. Homotrimer. A divalent metal cation is required as a cofactor.

The catalysed reaction is 4-CDP-2-C-methyl-D-erythritol 2-phosphate = 2-C-methyl-D-erythritol 2,4-cyclic diphosphate + CMP. Its pathway is isoprenoid biosynthesis; isopentenyl diphosphate biosynthesis via DXP pathway; isopentenyl diphosphate from 1-deoxy-D-xylulose 5-phosphate: step 4/6. Its function is as follows. Involved in the biosynthesis of isopentenyl diphosphate (IPP) and dimethylallyl diphosphate (DMAPP), two major building blocks of isoprenoid compounds. Catalyzes the conversion of 4-diphosphocytidyl-2-C-methyl-D-erythritol 2-phosphate (CDP-ME2P) to 2-C-methyl-D-erythritol 2,4-cyclodiphosphate (ME-CPP) with a corresponding release of cytidine 5-monophosphate (CMP). The protein is 2-C-methyl-D-erythritol 2,4-cyclodiphosphate synthase of Gemmatimonas aurantiaca (strain DSM 14586 / JCM 11422 / NBRC 100505 / T-27).